The sequence spans 955 residues: Kinesin heavy chain isoform 5C (955 aa).

In terms of domain architecture, Kinesin motor spans 8–327; sequence SIKVMCRFRP…LMFGQRAKTI (320 aa). ATP-binding residues include glutamine 87, serine 89, serine 90, glycine 91, lysine 92, threonine 93, histidine 94, and lysine 99. The segment at 174–315 is microtubule-binding; that stretch reads VSSPEEVMDV…PSVFNEAETK (142 aa). A coiled-coil region spans residues 332–366; it reads SVNLELTAEEWKKKYEKEKEKNKALKSVIQHLEVE. Threonine 403 is modified (phosphothreonine). Coiled coils occupy residues 413–538 and 590–913; these read KEKY…LQEL and ISKM…KNMA. A globular region spans residues 859–955; that stretch reads CELPKLEKRL…GSSNSTHYQK (97 aa). The segment at 909–955 is disordered; that stretch reads AKNMARRAHSAQIAKPIRPGHYPASSPTAVHAVRGGGGSSNSTHYQK.

It belongs to the TRAFAC class myosin-kinesin ATPase superfamily. Kinesin family. Kinesin subfamily. Oligomer composed of two heavy chains and two light chains. Interacts with GRIP1. Interacts with TRAK1. Interacts with ZFYVE27. Interacts with KLC3.

It is found in the cytoplasm. The protein localises to the cytoskeleton. The protein resides in the cell projection. Its subcellular location is the dendrite. The catalysed reaction is ATP + H2O = ADP + phosphate + H(+). In terms of biological role, microtubule-associated force-producing protein that may play a role in organelle transport. Has ATPase activity. Involved in synaptic transmission. Mediates dendritic trafficking of mRNAs. Required for anterograde axonal transportation of MAPK8IP3/JIP3 which is essential for MAPK8IP3/JIP3 function in axon elongation. The sequence is that of Kinesin heavy chain isoform 5C (Kif5c) from Rattus norvegicus (Rat).